An 89-amino-acid polypeptide reads, in one-letter code: Cell division protein ZapA (89 aa).

Belongs to the ZapA family. Type 2 subfamily. Homodimer. Interacts with FtsZ.

It is found in the cytoplasm. In terms of biological role, activator of cell division through the inhibition of FtsZ GTPase activity, therefore promoting FtsZ assembly into bundles of protofilaments necessary for the formation of the division Z ring. It is recruited early at mid-cell but it is not essential for cell division. This Bacillus mycoides (strain KBAB4) (Bacillus weihenstephanensis) protein is Cell division protein ZapA.